The primary structure comprises 72 residues: MSARFEGSYLGDATRLADDAVLECKICWQRYDPAEGDPVWQIPPGTPFAALPAHWRCPRCDGDREQFMVVDG.

The region spanning 19–72 (DAVLECKICWQRYDPAEGDPVWQIPPGTPFAALPAHWRCPRCDGDREQFMVVDG) is the Rubredoxin-like domain. 4 residues coordinate Fe cation: Cys24, Cys27, Cys57, and Cys60.

It belongs to the rubredoxin family. Fe(3+) serves as cofactor.

Its function is as follows. Rubredoxin is a small nonheme, iron protein lacking acid-labile sulfide. Its single Fe, chelated to 4 Cys, functions as an electron acceptor and may also stabilize the conformation of the molecule. Could be involved in hydrogenase-linked redox processes. The sequence is that of Rubredoxin (hoxR) from Azotobacter vinelandii.